An 86-amino-acid polypeptide reads, in one-letter code: Small ribosomal subunit protein uS17 (86 aa).

It belongs to the universal ribosomal protein uS17 family. Part of the 30S ribosomal subunit.

In terms of biological role, one of the primary rRNA binding proteins, it binds specifically to the 5'-end of 16S ribosomal RNA. The sequence is that of Small ribosomal subunit protein uS17 from Shouchella clausii (strain KSM-K16) (Alkalihalobacillus clausii).